Reading from the N-terminus, the 249-residue chain is PF03932 family protein CutC (249 aa).

It belongs to the CutC family.

Its subcellular location is the cytoplasm. This Bacteroides thetaiotaomicron (strain ATCC 29148 / DSM 2079 / JCM 5827 / CCUG 10774 / NCTC 10582 / VPI-5482 / E50) protein is PF03932 family protein CutC.